The following is an 87-amino-acid chain: U24 protein (87 aa).

Phosphothreonine is present on T6. Residues 8 to 11 (PPSY) carry the PPXY motif motif. A helical membrane pass occupies residues 59 to 79 (FLVLTGLAIAMILFIVFVLYV).

In terms of assembly, interacts with host ITCH; this interaction probably mediates ITCH degradation. Interacts probably with NEDD4.

The protein resides in the membrane. Functionally, down-regulates the TCR/CD3E complex and the transferrin receptor TFRC in host T-cells by blocking them from recycling back to the cell surface. The protein is U24 protein (U24) of Homo sapiens (Human).